The following is a 71-amino-acid chain: Protein SlyX homolog (71 aa).

This sequence belongs to the SlyX family.

In Stutzerimonas stutzeri (strain A1501) (Pseudomonas stutzeri), this protein is Protein SlyX homolog.